Here is a 231-residue protein sequence, read N- to C-terminus: NADH-ubiquinone oxidoreductase chain 4 (231 aa).

Transmembrane regions (helical) follow at residues P1–I21, M34–L54, L62–W84, A89–Y111, I128–P148, and T169–L189.

Belongs to the complex I subunit 4 family.

Its subcellular location is the mitochondrion membrane. It carries out the reaction a ubiquinone + NADH + 5 H(+)(in) = a ubiquinol + NAD(+) + 4 H(+)(out). Its function is as follows. Core subunit of the mitochondrial membrane respiratory chain NADH dehydrogenase (Complex I) that is believed to belong to the minimal assembly required for catalysis. Complex I functions in the transfer of electrons from NADH to the respiratory chain. The immediate electron acceptor for the enzyme is believed to be ubiquinone. The polypeptide is NADH-ubiquinone oxidoreductase chain 4 (MT-ND4) (Bothrops erythromelas (Caatinga lance head)).